The following is a 227-amino-acid chain: Cytochrome c oxidase subunit 2 (227 aa).

Residues Met-1 to Ser-14 lie on the Mitochondrial intermembrane side of the membrane. Residues Pro-15–Met-45 form a helical membrane-spanning segment. At Leu-46–Gln-59 the chain is on the mitochondrial matrix side. The chain crosses the membrane as a helical span at residues Glu-60 to Met-87. The Mitochondrial intermembrane segment spans residues Asp-88–Ile-227. Cu cation contacts are provided by His-161, Cys-196, Glu-198, Cys-200, His-204, and Met-207. Glu-198 contributes to the Mg(2+) binding site. At Tyr-218 the chain carries Phosphotyrosine.

Belongs to the cytochrome c oxidase subunit 2 family. In terms of assembly, component of the cytochrome c oxidase (complex IV, CIV), a multisubunit enzyme composed of 14 subunits. The complex is composed of a catalytic core of 3 subunits MT-CO1, MT-CO2 and MT-CO3, encoded in the mitochondrial DNA, and 11 supernumerary subunits COX4I, COX5A, COX5B, COX6A, COX6B, COX6C, COX7A, COX7B, COX7C, COX8 and NDUFA4, which are encoded in the nuclear genome. The complex exists as a monomer or a dimer and forms supercomplexes (SCs) in the inner mitochondrial membrane with NADH-ubiquinone oxidoreductase (complex I, CI) and ubiquinol-cytochrome c oxidoreductase (cytochrome b-c1 complex, complex III, CIII), resulting in different assemblies (supercomplex SCI(1)III(2)IV(1) and megacomplex MCI(2)III(2)IV(2)). Found in a complex with TMEM177, COA6, COX18, COX20, SCO1 and SCO2. Interacts with TMEM177 in a COX20-dependent manner. Interacts with COX20. Interacts with COX16. Cu cation serves as cofactor.

The protein resides in the mitochondrion inner membrane. The enzyme catalyses 4 Fe(II)-[cytochrome c] + O2 + 8 H(+)(in) = 4 Fe(III)-[cytochrome c] + 2 H2O + 4 H(+)(out). In terms of biological role, component of the cytochrome c oxidase, the last enzyme in the mitochondrial electron transport chain which drives oxidative phosphorylation. The respiratory chain contains 3 multisubunit complexes succinate dehydrogenase (complex II, CII), ubiquinol-cytochrome c oxidoreductase (cytochrome b-c1 complex, complex III, CIII) and cytochrome c oxidase (complex IV, CIV), that cooperate to transfer electrons derived from NADH and succinate to molecular oxygen, creating an electrochemical gradient over the inner membrane that drives transmembrane transport and the ATP synthase. Cytochrome c oxidase is the component of the respiratory chain that catalyzes the reduction of oxygen to water. Electrons originating from reduced cytochrome c in the intermembrane space (IMS) are transferred via the dinuclear copper A center (CU(A)) of subunit 2 and heme A of subunit 1 to the active site in subunit 1, a binuclear center (BNC) formed by heme A3 and copper B (CU(B)). The BNC reduces molecular oxygen to 2 water molecules using 4 electrons from cytochrome c in the IMS and 4 protons from the mitochondrial matrix. The sequence is that of Cytochrome c oxidase subunit 2 (MT-CO2) from Conilurus penicillatus (Brush-tailed rabbit-rat).